We begin with the raw amino-acid sequence, 365 residues long: Chorismate synthase (365 aa).

Arginine 46 contacts NADP(+). Residues 123–125, 241–242, glycine 281, 296–300, and arginine 322 contribute to the FMN site; these read RSS, NG, and KPTPS.

This sequence belongs to the chorismate synthase family. Homotetramer. FMNH2 serves as cofactor.

It catalyses the reaction 5-O-(1-carboxyvinyl)-3-phosphoshikimate = chorismate + phosphate. It participates in metabolic intermediate biosynthesis; chorismate biosynthesis; chorismate from D-erythrose 4-phosphate and phosphoenolpyruvate: step 7/7. Catalyzes the anti-1,4-elimination of the C-3 phosphate and the C-6 proR hydrogen from 5-enolpyruvylshikimate-3-phosphate (EPSP) to yield chorismate, which is the branch point compound that serves as the starting substrate for the three terminal pathways of aromatic amino acid biosynthesis. This reaction introduces a second double bond into the aromatic ring system. The sequence is that of Chorismate synthase from Helicobacter pylori (strain Shi470).